A 201-amino-acid polypeptide reads, in one-letter code: Large ribosomal subunit protein uL4 (201 aa).

The disordered stretch occupies residues 44–71 (RAQKTRAEVSGSGKKPWRQKGTGRARSG).

It belongs to the universal ribosomal protein uL4 family. Part of the 50S ribosomal subunit.

One of the primary rRNA binding proteins, this protein initially binds near the 5'-end of the 23S rRNA. It is important during the early stages of 50S assembly. It makes multiple contacts with different domains of the 23S rRNA in the assembled 50S subunit and ribosome. In terms of biological role, forms part of the polypeptide exit tunnel. The sequence is that of Large ribosomal subunit protein uL4 from Actinobacillus succinogenes (strain ATCC 55618 / DSM 22257 / CCUG 43843 / 130Z).